The chain runs to 554 residues: DNA ligase B (554 aa).

Lys122 acts as the N6-AMP-lysine intermediate in catalysis.

It belongs to the NAD-dependent DNA ligase family. LigB subfamily.

The enzyme catalyses NAD(+) + (deoxyribonucleotide)n-3'-hydroxyl + 5'-phospho-(deoxyribonucleotide)m = (deoxyribonucleotide)n+m + AMP + beta-nicotinamide D-nucleotide.. Catalyzes the formation of phosphodiester linkages between 5'-phosphoryl and 3'-hydroxyl groups in double-stranded DNA using NAD as a coenzyme and as the energy source for the reaction. The protein is DNA ligase B of Pseudomonas fluorescens (strain SBW25).